We begin with the raw amino-acid sequence, 55 residues long: Large ribosomal subunit protein bL33 (55 aa).

Positions 1 to 11 (MAKGGREKIKL) are enriched in basic and acidic residues. The segment at 1 to 26 (MAKGGREKIKLESTAGTGHFYTTDKN) is disordered.

It belongs to the bacterial ribosomal protein bL33 family.

This Methylibium petroleiphilum (strain ATCC BAA-1232 / LMG 22953 / PM1) protein is Large ribosomal subunit protein bL33.